The following is a 311-amino-acid chain: Methionyl-tRNA formyltransferase (311 aa).

Residue 109 to 112 (SLLP) participates in (6S)-5,6,7,8-tetrahydrofolate binding.

Belongs to the Fmt family.

It carries out the reaction L-methionyl-tRNA(fMet) + (6R)-10-formyltetrahydrofolate = N-formyl-L-methionyl-tRNA(fMet) + (6S)-5,6,7,8-tetrahydrofolate + H(+). Functionally, attaches a formyl group to the free amino group of methionyl-tRNA(fMet). The formyl group appears to play a dual role in the initiator identity of N-formylmethionyl-tRNA by promoting its recognition by IF2 and preventing the misappropriation of this tRNA by the elongation apparatus. This chain is Methionyl-tRNA formyltransferase, found in Staphylococcus aureus (strain MW2).